The chain runs to 144 residues: L-fucose mutarotase (144 aa).

Residue His22 is the Proton donor of the active site. Residues Asp30, Arg109, and 131–133 contribute to the substrate site; that span reads YGN.

This sequence belongs to the RbsD / FucU family. FucU mutarotase subfamily. In terms of assembly, homodecamer.

It is found in the cytoplasm. The catalysed reaction is alpha-L-fucose = beta-L-fucose. It participates in carbohydrate metabolism; L-fucose metabolism. Involved in the anomeric conversion of L-fucose. The polypeptide is L-fucose mutarotase (Histophilus somni (strain 2336) (Haemophilus somnus)).